A 356-amino-acid chain; its full sequence is Vesicular integral-membrane protein VIP36 (356 aa).

The first 44 residues, 1–44, serve as a signal peptide directing secretion; that stretch reads MAAEGWIWRWGWGRRCLGRPGLLGPGPGPTTPLFLLLLLGSVTA. Residues 45-322 lie on the Lumenal side of the membrane; it reads DITDGNSEHL…FRSGPLTGWR (278 aa). The 225-residue stretch at 52–276 folds into the L-type lectin-like domain; that stretch reads EHLKREHSLI…DIISMKLFQL (225 aa). A carbohydrate-binding residues include S96 and D131. Positions 162, 164, and 166 each coordinate Ca(2+). 164–166 provides a ligand contact to a carbohydrate; the sequence is YPN. A glycan (N-linked (GlcNAc...) asparagine) is linked at N183. Residue H190 coordinates a carbohydrate. D193 serves as a coordination point for Ca(2+). A disulfide bridge links C202 with C239. 260-262 provides a ligand contact to a carbohydrate; the sequence is GDL. The helical transmembrane segment at 323–345 threads the bilayer; sequence VFLLLLCALLGIVVCAVVGAVVF. The Cytoplasmic portion of the chain corresponds to 346 to 356; that stretch reads QKRQERNKRFY.

Ca(2+) is required as a cofactor. In terms of tissue distribution, ubiquitous.

The protein resides in the endoplasmic reticulum-Golgi intermediate compartment membrane. Its subcellular location is the golgi apparatus membrane. The protein localises to the endoplasmic reticulum membrane. Plays a role as an intracellular lectin in the early secretory pathway. Interacts with N-acetyl-D-galactosamine and high-mannose type glycans and may also bind to O-linked glycans. Involved in the transport and sorting of glycoproteins carrying high mannose-type glycans. The sequence is that of Vesicular integral-membrane protein VIP36 (LMAN2) from Homo sapiens (Human).